Here is a 298-residue protein sequence, read N- to C-terminus: Inosose dehydratase (298 aa).

The protein belongs to the IolE/MocC family. Requires glutathione as cofactor. Co(2+) serves as cofactor. Mn(2+) is required as a cofactor.

It catalyses the reaction scyllo-inosose = 3D-3,5/4-trihydroxycyclohexane-1,2-dione + H2O. Its pathway is polyol metabolism; myo-inositol degradation into acetyl-CoA; acetyl-CoA from myo-inositol: step 2/7. Functionally, catalyzes the dehydration of inosose (2-keto-myo-inositol, 2KMI or 2,4,6/3,5-pentahydroxycyclohexanone) to 3D-(3,5/4)-trihydroxycyclohexane-1,2-dione (D-2,3-diketo-4-deoxy-epi-inositol). This chain is Inosose dehydratase, found in Bacillus cereus (strain AH820).